Here is a 20-residue protein sequence, read N- to C-terminus: DnaJ homolog subfamily C member 1 (20 aa).

The Lumenal portion of the chain corresponds to Trp-1–Tyr-20. Residues Asn-18 to Tyr-20 form the J domain.

Interacts (via SANT 2 domain) with SERPINA3; the interaction delays the formation of the covalent inhibitory complex SERPINA3-chymotrypsin, but does not alter the catalytic activity of SERPINA3. Interacts (via SANT 2 domain) with ITIH4 (via C-terminus); the interaction protects ITIH4 against in vitro cleavage by kallikrein. Interacts (via J domain) with HSPA5. Interacts (via cytosolic domain) with ribosomes.

The protein resides in the endoplasmic reticulum membrane. It is found in the nucleus membrane. The protein localises to the microsome membrane. This Canis lupus familiaris (Dog) protein is DnaJ homolog subfamily C member 1 (DNAJC1).